The following is an 864-amino-acid chain: Alanine--tRNA ligase (864 aa).

4 residues coordinate Zn(2+): His-534, His-538, Cys-639, and His-643.

This sequence belongs to the class-II aminoacyl-tRNA synthetase family. Zn(2+) serves as cofactor.

The protein localises to the cytoplasm. The enzyme catalyses tRNA(Ala) + L-alanine + ATP = L-alanyl-tRNA(Ala) + AMP + diphosphate. Its function is as follows. Catalyzes the attachment of alanine to tRNA(Ala) in a two-step reaction: alanine is first activated by ATP to form Ala-AMP and then transferred to the acceptor end of tRNA(Ala). Also edits incorrectly charged Ser-tRNA(Ala) and Gly-tRNA(Ala) via its editing domain. The sequence is that of Alanine--tRNA ligase from Onion yellows phytoplasma (strain OY-M).